A 122-amino-acid polypeptide reads, in one-letter code: MIQQQTMLDVADNSGAKKVQCIKVLGGSRRRYASIGDVIVVSVKEAIPQAKVKKGEVARAVIVRTSREVKRPDGSYIRFDGNSAVLINKDLEPIGTRIFGPVARELRARKFMKIISLAPEVL.

It belongs to the universal ribosomal protein uL14 family. In terms of assembly, part of the 50S ribosomal subunit. Forms a cluster with proteins L3 and L19. In the 70S ribosome, L14 and L19 interact and together make contacts with the 16S rRNA in bridges B5 and B8.

In terms of biological role, binds to 23S rRNA. Forms part of two intersubunit bridges in the 70S ribosome. This chain is Large ribosomal subunit protein uL14, found in Anaeromyxobacter sp. (strain Fw109-5).